The sequence spans 797 residues: Sodium/hydrogen exchanger 4 (797 aa).

The Cytoplasmic segment spans residues 1-13 (MGPAMFMAFRLWN). Residues 14 to 28 (WLLLLAVLTRSEATS) constitute an intramembrane region (name=A/M1). Residues 29–69 (YVNESSNPTAQQAPDARFAASSSDPDEGISVFELDYDYVQI) are Cytoplasmic-facing. The disordered stretch occupies residues 32–52 (ESSNPTAQQAPDARFAASSSD). Residues 70–90 (PYEVTLWILLASLAKIGFHLY) constitute an intramembrane region (name=B/M2). The Cytoplasmic segment spans residues 91–94 (HRLP). Residues 95–114 (HLMPESCLLIIVGALVGGII) form a helical membrane-spanning segment. The Extracellular portion of the chain corresponds to 115 to 127 (FGTHHKSPPVMDS). The chain crosses the membrane as a helical span at residues 128-148 (SIYFLYLLPPIVLESGYFMPT). Topologically, residues 149–154 (RPFFEN) are cytoplasmic. A helical transmembrane segment spans residues 155-175 (IGSILWWAGLGALINAFGIGL). Residues 176 to 194 (SLYFICQIKAFGLGDINLL) are Extracellular-facing. Residues 195–215 (HNLLFGSLISAVDPVAVLAVF) traverse the membrane as a helical segment. At 216-226 (EEARVNEQLYM) the chain is on the cytoplasmic side. Residues 227-247 (MIFGEALLNDGISVVLYNILI) traverse the membrane as a helical segment. Topologically, residues 248–270 (AFTKMHKFEDIEAVDILAGCARF) are extracellular. Residues 271-291 (VIVGCGGVFFGIIFGFISAFI) traverse the membrane as a helical segment. The Cytoplasmic segment spans residues 292–304 (TRFTQNISAIEPL). A helical transmembrane segment spans residues 305-325 (IVFMFSYLSYLAAETLYLSGI). At 326 to 352 (LAITACAVTMKKYVEENVSQTSYTTIK) the chain is on the extracellular side. The N-linked (GlcNAc...) asparagine glycan is linked to Asn-342. A helical membrane pass occupies residues 353-373 (YFMKMLSSVSETLIFIFMGVS). At 374–384 (TIGKNHEWNWA) the chain is on the cytoplasmic side. A helical membrane pass occupies residues 385-405 (FICFTLLFCQIWRAISVFTLF). The Extracellular segment spans residues 406-420 (YVSNQFRTFPFSIKD). Positions 421–441 (QFIIFYSGVRGAGSFSLAFLL) form an intramembrane region, name=L. At 442 to 450 (PLSLFPRKK) the chain is on the extracellular side. The chain crosses the membrane as a helical span at residues 451–471 (LFVTATLVVTYFTVFFQGITI). Over 472 to 797 (GPLVRYLDVR…KSHSPLLHRK (326 aa)) the chain is Cytoplasmic. Residues 759-769 (YDSGEQTEEET) show a composition bias toward acidic residues. Residues 759–797 (YDSGEQTEEETSAILSRWTAEHRHSTEHHKSHSPLLHRK) are disordered. Basic residues predominate over residues 783-797 (STEHHKSHSPLLHRK).

Belongs to the monovalent cation:proton antiporter 1 (CPA1) transporter (TC 2.A.36) family. Homodimer; each protomer has one site for sodium and one site for proton binding. Interacts with CHP1 and CHP2. In terms of processing, may be phosphorylated. As to expression, expressed in kidney. Expressed in uterus and endometrial epithelial cells. Expressed in the inner segments of inner medullary collecting ducts (IMCD) in kidney. Expressed in AGTR1-positive neurons in organum vasculosum of the lamina terminalis (at protein level).

It localises to the basolateral cell membrane. It is found in the apical cell membrane. Its subcellular location is the zymogen granule membrane. It carries out the reaction Na(+)(in) + H(+)(out) = Na(+)(out) + H(+)(in). It catalyses the reaction Na(+)(out) + NH4(+)(in) = Na(+)(in) + NH4(+)(out). Its activity is regulated as follows. Up-regulated in response to high extracellular sodium concentration. In terms of biological role, electroneutral antiporter that exchanges sodium for protons or ammonium ions at the basolateral membrane of epithelia to regulate cell volume and intracellular pH upon hypertonic conditions. As part of transcellular ammonia transport in renal tubules, mediates basolateral ammonium extrusion in the medullary thick ascending limb, regulating the corticopapillary ammonium gradient and overall renal acid excretion. Mediates sodium:proton exchange in gastric parietal cells secondary to cAMP-dependent acid secretion and hyperosmolarity. Possibly coupled to chloride:bicarbonate antiporter, enables loading of parietal cells with sodium and chloride ions to maintain cell volume and normal gastric acid secretion. Functions as a sodium sensor in neurons of organum vasculosum of the lamina terminalis where it regulates water intake in response to increased sodium concentration in body fluids. In Mus musculus (Mouse), this protein is Sodium/hydrogen exchanger 4 (Slc9a4).